Here is a 391-residue protein sequence, read N- to C-terminus: Nucleosome assembly protein 1-like 1 (391 aa).

Residues 1-10 (MADIDNKEQS) are compositionally biased toward basic and acidic residues. The tract at residues 1–32 (MADIDNKEQSELDQDLDDVEEVEEEETGEETK) is disordered. Residue alanine 2 is modified to N-acetylalanine. Residue serine 10 is modified to Phosphoserine. Residues 11–28 (ELDQDLDDVEEVEEEETG) are compositionally biased toward acidic residues. Threonine 62 and threonine 64 each carry phosphothreonine. Serine 69 carries the phosphoserine modification. Lysine 116 is modified (N6-acetyllysine). The NAP1L motif signature appears at 125–150 (YEPTEEECEWKPDEEDEISEELKEKA). The segment covering 132–143 (CEWKPDEEDEIS) has biased composition (acidic residues). The disordered stretch occupies residues 132–163 (CEWKPDEEDEISEELKEKAKIEDEKKDEEKED). Serine 143 carries the phosphoserine modification. Residues 144–163 (EELKEKAKIEDEKKDEEKED) show a composition bias toward basic and acidic residues. The Nuclear localization signal signature appears at 273 to 279 (IKKKQKH). Over residues 346–376 (AIEDDDDDYDEEGEEADEEGEEEGDEENDPD) the composition is skewed to acidic residues. Residues 346-391 (AIEDDDDDYDEEGEEADEEGEEEGDEENDPDYDPKKDQNPAECKQQ) are disordered. A 5-glutamyl polyglycine mark is found at glutamate 359 and glutamate 360. A compositionally biased stretch (basic and acidic residues) spans 377 to 391 (YDPKKDQNPAECKQQ). Cysteine 388 is modified (cysteine methyl ester). Cysteine 388 is lipidated: S-farnesyl cysteine. The propeptide at 389–391 (KQQ) is removed in mature form.

It belongs to the nucleosome assembly protein (NAP) family. In terms of assembly, homodimer. The dimer binds strongly and sequentially to single and double H2A-H2B heterodimers. Interacts with ERCC6; this interaction increases ERCC6 processivity. Interacts with RAD54. Interacts with SETD1A. Post-translationally, polyglycylated by TTLL10 on glutamate residues, resulting in polyglycine chains on the gamma-carboxyl group. Both polyglutamylation and polyglycylation modifications can coexist on the same protein on adjacent residues, and lowering polyglycylation levels increases polyglutamylation, and reciprocally. In terms of processing, polyglutamylated by TTLL4 on glutamate residues, resulting in polyglutamate chains on the gamma-carboxyl group. Both polyglutamylation and polyglycylation modifications can coexist on the same protein on adjacent residues, and lowering polyglycylation levels increases polyglutamylation, and reciprocally.

The protein localises to the nucleus. It localises to the melanosome. Its subcellular location is the cytoplasm. Functionally, histone chaperone that plays a role in the nuclear import of H2A-H2B and nucleosome assembly. Also participates in several important DNA repair mechanisms: greatly enhances ERCC6-mediated chromatin remodeling which is essential for transcription-coupled nucleotide excision DNA repair. Also stimulates homologous recombination (HR) by RAD51 and RAD54 which is essential in mitotic DNA double strand break (DSB) repair. Plays a key role in the regulation of embryonic neurogenesis. Promotes the proliferation of neural progenitors and inhibits neuronal differentiation during cortical development. Regulates neurogenesis via the modulation of RASSF10; regulates RASSF10 expression by promoting SETD1A-mediated H3K4 methylation at the RASSF10 promoter. This is Nucleosome assembly protein 1-like 1 (NAP1L1) from Pongo abelii (Sumatran orangutan).